The primary structure comprises 635 residues: Very-long-chain aldehyde decarbonylase GL1-6 (635 aa).

Helical transmembrane passes span 46 to 66, 100 to 120, 127 to 147, and 183 to 203; these read LLNFMVFPMLLLRLLYGQLWI, IILTALVFYLVSATMPQAQVA, GMVVTAVLHAGPVEFLYYWLH, and VVYFVLLAIPILSTVATGTVS. Positions 139-273 constitute a Fatty acid hydroxylase domain; the sequence is VEFLYYWLHR…MPVYDYIYGT (135 aa).

It belongs to the sterol desaturase family. In terms of assembly, homodimer. In terms of tissue distribution, expressed in germinating seeds and shoots.

It is found in the endoplasmic reticulum membrane. It catalyses the reaction a long-chain fatty aldehyde + 2 NADPH + O2 + H(+) = a long-chain alkane + formate + 2 NADP(+) + H2O. In terms of biological role, aldehyde decarbonylase involved in the conversion of aldehydes to alkanes. Core component of a very-long-chain alkane synthesis complex. This is Very-long-chain aldehyde decarbonylase GL1-6 from Oryza sativa subsp. japonica (Rice).